The following is a 461-amino-acid chain: Argininosuccinate lyase (461 aa).

Belongs to the lyase 1 family. Argininosuccinate lyase subfamily.

It is found in the cytoplasm. It carries out the reaction 2-(N(omega)-L-arginino)succinate = fumarate + L-arginine. It participates in amino-acid biosynthesis; L-arginine biosynthesis; L-arginine from L-ornithine and carbamoyl phosphate: step 3/3. The polypeptide is Argininosuccinate lyase (Limosilactobacillus reuteri subsp. reuteri (strain JCM 1112) (Lactobacillus reuteri)).